The sequence spans 163 residues: RRM-domain-containing protein ECU01_0840 (163 aa).

The RRM domain occupies 84-163; sequence CSVKLSNLPL…SLGLSAEIAR (80 aa).

This is RRM-domain-containing protein ECU01_0840 from Encephalitozoon cuniculi (strain GB-M1) (Microsporidian parasite).